The sequence spans 585 residues: Probable phosphoglucomutase, cytoplasmic 2 (585 aa).

Residues 1–20 (MVSFKVSLVSTSPIDGQKPG) are disordered. Alpha-D-glucose 1,6-bisphosphate is bound by residues Arg-25 and Ser-124. Catalysis depends on Ser-124, which acts as the Phosphoserine intermediate. The Mg(2+) site is built by Ser-124, Asp-301, Asp-303, and Asp-305. A Phosphoserine modification is found at Ser-124. Residues Asp-305, Arg-306, Thr-369, Glu-388, Ser-390, and Lys-401 each contribute to the alpha-D-glucose 1,6-bisphosphate site.

This sequence belongs to the phosphohexose mutase family. In terms of assembly, monomer. The cofactor is Mg(2+).

The protein resides in the cytoplasm. It carries out the reaction alpha-D-glucose 1-phosphate = alpha-D-glucose 6-phosphate. The catalysed reaction is O-phospho-L-seryl-[protein] + alpha-D-glucose 1-phosphate = alpha-D-glucose 1,6-bisphosphate + L-seryl-[protein]. The enzyme catalyses alpha-D-glucose 1,6-bisphosphate + L-seryl-[protein] = O-phospho-L-seryl-[protein] + alpha-D-glucose 6-phosphate. Functionally, catalyzes the reversible isomerization of alpha-D-glucose 1-phosphate to alpha-D-glucose 6-phosphate. The mechanism proceeds via the intermediate compound alpha-D-glucose 1,6-bisphosphate. This enzyme participates in both the breakdown and synthesis of glucose. The polypeptide is Probable phosphoglucomutase, cytoplasmic 2 (Arabidopsis thaliana (Mouse-ear cress)).